The following is a 640-amino-acid chain: RecBCD enzyme subunit RecD (640 aa).

194–201 lines the ATP pocket; sequence GGPGTGKT.

The protein belongs to the RecD family. Heterotrimer of RecB, RecC and RecD. All subunits contribute to DNA-binding.

The catalysed reaction is Couples ATP hydrolysis with the unwinding of duplex DNA at the replication fork by translocating in the 5'-3' direction. This creates two antiparallel DNA single strands (ssDNA). The leading ssDNA polymer is the template for DNA polymerase III holoenzyme which synthesizes a continuous strand.. The enzyme catalyses ATP + H2O = ADP + phosphate + H(+). A helicase/nuclease that prepares dsDNA breaks (DSB) for recombinational DNA repair. Binds to DSBs and unwinds DNA via a highly rapid and processive ATP-dependent bidirectional helicase activity. Unwinds dsDNA until it encounters a Chi (crossover hotspot instigator) sequence from the 3' direction. Cuts ssDNA a few nucleotides 3' to the Chi site. The properties and activities of the enzyme are changed at Chi. The Chi-altered holoenzyme produces a long 3'-ssDNA overhang and facilitates RecA-binding to the ssDNA for homologous DNA recombination and repair. Holoenzyme degrades any linearized DNA that is unable to undergo homologous recombination. In the holoenzyme this subunit has ssDNA-dependent ATPase and 5'-3' helicase activity. When added to pre-assembled RecBC greatly stimulates nuclease activity and augments holoenzyme processivity. Negatively regulates the RecA-loading ability of RecBCD. The sequence is that of RecBCD enzyme subunit RecD from Haemophilus influenzae (strain ATCC 51907 / DSM 11121 / KW20 / Rd).